The chain runs to 855 residues: MNESFDKDFSNHTPMMQQYLKLKAQHPEILLFYRMGDFYELFYDDAKRASQLLDISLTKRGASAGEPIPMAGIPHHAVENYLAKLVNQGESVAICEQIGDPATSKGPVERKVVRIVTPGTISDEALLQERQDNLLAAIWQDGKGYGYATLDISSGRFRLSEPADRETMAAELQRTNPAELLYAEDFAEMALIEGRRGLRRRPLWEFEIDTARQQLNLQFGTRDLVGFGVENASRGLCAAGCLLQYVKDTQRTSLPHIRSITMERQQDSIIMDAATRRNLEITQNLAGGVENTLAAVLDCTVTPMGSRMLKRWLHMPVRNTNILRERQQTIGALQDTVSELQPVLRQVGDLERILARLALRTARPRDLARMRHAFQQLPELHAQLETVDSAPVQALRKKMGDFAELRDLLERAIIDAPPVLVRDGGVIAPGYHEELDEWRALADGATDYLDRLEIRERERTGLDTLKVGYNAVHGYYIQISRGQSHLAPINYVRRQTLKNAERYIIPELKEYEDKVLTSKGKALALEKQLYDELFDLLLPHLADLQQSANALAELDVLVNLAERAWTLNYTCPTFTDKPGIRITEGRHPVVEQVLNEPFIANPLNLSPQRRMLIITGPNMGGKSTYMRQTALIALLAYIGSYVPAQNVEIGPIDRIFTRVGAADDLASGRSTFMVEMTETANILHNATENSLVLMDEIGRGTSTYDGLSLAWACAENLANKIKALTLFATHYFELTQLPEKMEGVANVHLDALEHGDTIAFMHSVQDGAASKSYGLAVAALAGVPKEVIKRARQKLRELESISPNAAATQVDGTQMSLLAAPEETSPAVEALENLDPDSLTPRQALEWIYRLKSLV.

Gly-616 to Ser-623 lines the ATP pocket.

The protein belongs to the DNA mismatch repair MutS family.

Functionally, this protein is involved in the repair of mismatches in DNA. It is possible that it carries out the mismatch recognition step. This protein has a weak ATPase activity. The protein is DNA mismatch repair protein MutS of Salmonella newport (strain SL254).